The following is a 571-amino-acid chain: Proline--tRNA ligase (571 aa).

This sequence belongs to the class-II aminoacyl-tRNA synthetase family. ProS type 1 subfamily. As to quaternary structure, homodimer.

The protein localises to the cytoplasm. The enzyme catalyses tRNA(Pro) + L-proline + ATP = L-prolyl-tRNA(Pro) + AMP + diphosphate. Its function is as follows. Catalyzes the attachment of proline to tRNA(Pro) in a two-step reaction: proline is first activated by ATP to form Pro-AMP and then transferred to the acceptor end of tRNA(Pro). As ProRS can inadvertently accommodate and process non-cognate amino acids such as alanine and cysteine, to avoid such errors it has two additional distinct editing activities against alanine. One activity is designated as 'pretransfer' editing and involves the tRNA(Pro)-independent hydrolysis of activated Ala-AMP. The other activity is designated 'posttransfer' editing and involves deacylation of mischarged Ala-tRNA(Pro). The misacylated Cys-tRNA(Pro) is not edited by ProRS. This Pseudoalteromonas atlantica (strain T6c / ATCC BAA-1087) protein is Proline--tRNA ligase.